The following is a 120-amino-acid chain: NAD(P)H-quinone oxidoreductase subunit 3, chloroplastic (120 aa).

3 consecutive transmembrane segments (helical) span residues 9–29 (IFWV…LISG), 64–84 (MFAL…PWAM), and 88–108 (VLGV…IVGL).

It belongs to the complex I subunit 3 family. As to quaternary structure, NDH is composed of at least 16 different subunits, 5 of which are encoded in the nucleus.

The protein localises to the plastid. It localises to the chloroplast thylakoid membrane. The catalysed reaction is a plastoquinone + NADH + (n+1) H(+)(in) = a plastoquinol + NAD(+) + n H(+)(out). It carries out the reaction a plastoquinone + NADPH + (n+1) H(+)(in) = a plastoquinol + NADP(+) + n H(+)(out). In terms of biological role, NDH shuttles electrons from NAD(P)H:plastoquinone, via FMN and iron-sulfur (Fe-S) centers, to quinones in the photosynthetic chain and possibly in a chloroplast respiratory chain. The immediate electron acceptor for the enzyme in this species is believed to be plastoquinone. Couples the redox reaction to proton translocation, and thus conserves the redox energy in a proton gradient. The polypeptide is NAD(P)H-quinone oxidoreductase subunit 3, chloroplastic (Cucumis sativus (Cucumber)).